Here is a 164-residue protein sequence, read N- to C-terminus: ATP synthase subunit b 1 (164 aa).

A helical transmembrane segment spans residues 8–28 (PETWVAVAFVILMGVFAYFGV).

This sequence belongs to the ATPase B chain family. F-type ATPases have 2 components, F(1) - the catalytic core - and F(0) - the membrane proton channel. F(1) has five subunits: alpha(3), beta(3), gamma(1), delta(1), epsilon(1). F(0) has three main subunits: a(1), b(2) and c(10-14). The alpha and beta chains form an alternating ring which encloses part of the gamma chain. F(1) is attached to F(0) by a central stalk formed by the gamma and epsilon chains, while a peripheral stalk is formed by the delta and b chains.

The protein localises to the cell inner membrane. Its function is as follows. F(1)F(0) ATP synthase produces ATP from ADP in the presence of a proton or sodium gradient. F-type ATPases consist of two structural domains, F(1) containing the extramembraneous catalytic core and F(0) containing the membrane proton channel, linked together by a central stalk and a peripheral stalk. During catalysis, ATP synthesis in the catalytic domain of F(1) is coupled via a rotary mechanism of the central stalk subunits to proton translocation. Component of the F(0) channel, it forms part of the peripheral stalk, linking F(1) to F(0). This chain is ATP synthase subunit b 1, found in Rhodopseudomonas palustris (strain BisB18).